Here is a 318-residue protein sequence, read N- to C-terminus: MTLTQAQMAPATDSREMVSPAVDLVLGASACCLACVFTNPLEVVKTRLQLQGELQAPGTYPRPYRGFVSSVTAVARADGLWGLQKGLAAGLLYQGLMNGVRFYCYSLACQAGLTQQPGGTVVAGAVAGALGAFVGSPAYLVKTQLQAQTGAAVAVGHQHQHQGVLSALETIWRQQGMLGLWRGVGAAVPRVTVGSAAQLATFTSAKAWVQDQQWFLEDSWLATLAGGMISSIAVVAVMAPFDVVSTRLYNQPVDRAGRGQLYGGLTDCLVKTCQQEGPLALYKGVGPAYLRLGPHTILSMFFWDELRKLALRAQHPGT.

Solcar repeat units lie at residues 18–111 (VSPA…ACQA), 115–208 (QQPG…AKAW), and 218–309 (DSWL…LRKL). 6 consecutive transmembrane segments (helical) span residues 21–41 (AVDLVLGASACCLACVFTNPL), 59–79 (TYPRPYRGFVSSVTAVARADG), 112–134 (GLTQQPGGTVVAGAVAGALGAFV), 184–205 (VGAAVPRVTVGSAAQLATFTSA), 220–240 (WLATLAGGMISSIAVVAVMAP), and 292–315 (LGPHTILSMFFWDELRKLALRAQH).

This sequence belongs to the mitochondrial carrier (TC 2.A.29) family.

The protein localises to the mitochondrion inner membrane. It catalyses the reaction a dicarboxylate(in) + sulfate(out) = a dicarboxylate(out) + sulfate(in). Its function is as follows. Putative antiporter that exchanges dicarboxylates and sulfur oxoanions across the inner membrane of mitochondria. This chain is Solute carrier family 25 member 34 (Slc25a34), found in Rattus norvegicus (Rat).